Reading from the N-terminus, the 195-residue chain is Protein GrpE (195 aa).

Residues 1-30 are disordered; it reads MSEQEKVEQEEISAELETQNEQEKPMEETE. A compositionally biased stretch (acidic residues) spans 10–20; sequence EEISAELETQN.

Belongs to the GrpE family. As to quaternary structure, homodimer.

The protein resides in the cytoplasm. In terms of biological role, participates actively in the response to hyperosmotic and heat shock by preventing the aggregation of stress-denatured proteins, in association with DnaK and GrpE. It is the nucleotide exchange factor for DnaK and may function as a thermosensor. Unfolded proteins bind initially to DnaJ; upon interaction with the DnaJ-bound protein, DnaK hydrolyzes its bound ATP, resulting in the formation of a stable complex. GrpE releases ADP from DnaK; ATP binding to DnaK triggers the release of the substrate protein, thus completing the reaction cycle. Several rounds of ATP-dependent interactions between DnaJ, DnaK and GrpE are required for fully efficient folding. The polypeptide is Protein GrpE (Histophilus somni (strain 2336) (Haemophilus somnus)).